A 229-amino-acid polypeptide reads, in one-letter code: Translin (229 aa).

The interval 86–90 (RFHEH) is DNA/RNA binding. Positions 177-198 (LDSGFRLLNLKNDSLRKRYDGL) are leucine-zipper.

It belongs to the translin family. Ring-shaped heterooctamer of six TSN and two TSNAX subunits, DNA/RNA binding occurs inside the ring.

It localises to the cytoplasm. Its subcellular location is the nucleus. Functionally, exhibits both single-stranded and double-stranded endoribonuclease activity. May act as an activator of RNA-induced silencing complex (RISC) by facilitating endonucleolytic cleavage of the siRNA passenger strand. In terms of biological role, DNA-binding protein that specifically recognizes consensus sequences at the breakpoint junctions in chromosomal translocations, mostly involving immunoglobulin (Ig)/T-cell receptor gene segments. Seems to recognize single-stranded DNA ends generated by staggered breaks occurring at recombination hot spots. This Gallus gallus (Chicken) protein is Translin (TSN).